A 55-amino-acid chain; its full sequence is Regulatory protein MokB (55 aa).

Its function is as follows. Overlapping regulatory peptide whose translation enables hokB expression. In Escherichia coli (strain K12), this protein is Regulatory protein MokB (mokB).